A 461-amino-acid chain; its full sequence is Elongation factor 1-alpha (461 aa).

The region spanning 5–242 (KIHINIVVIG…DAILPPSRPT (238 aa)) is the tr-type G domain. Positions 14–21 (GHVDSGKS) are G1. 14 to 21 (GHVDSGKS) is a binding site for GTP. A G2 region spans residues 70–74 (GITID). The interval 91–94 (DAPG) is G3. GTP contacts are provided by residues 91 to 95 (DAPGH) and 153 to 156 (NKMD). The tract at residues 153 to 156 (NKMD) is G4. Positions 194-196 (SGW) are G5. 5-glutamyl glycerylphosphorylethanolamine occurs at positions 301 and 374.

Belongs to the TRAFAC class translation factor GTPase superfamily. Classic translation factor GTPase family. EF-Tu/EF-1A subfamily.

Its subcellular location is the cytoplasm. In terms of biological role, this protein promotes the GTP-dependent binding of aminoacyl-tRNA to the A-site of ribosomes during protein biosynthesis. The protein is Elongation factor 1-alpha of Apis mellifera (Honeybee).